The sequence spans 539 residues: Glucans biosynthesis protein D (539 aa).

Positions 1-31 form a signal peptide, tat-type signal; sequence MHRRNLLKASMALAAYTGLSASGLLAARAWA.

It belongs to the OpgD/OpgG family. Post-translationally, predicted to be exported by the Tat system. The position of the signal peptide cleavage has not been experimentally proven.

Its subcellular location is the periplasm. The protein operates within glycan metabolism; osmoregulated periplasmic glucan (OPG) biosynthesis. Its function is as follows. Probably involved in the control of the structural glucose backbone of osmoregulated periplasmic glucans (OPGs). This Pseudomonas fluorescens (strain ATCC BAA-477 / NRRL B-23932 / Pf-5) protein is Glucans biosynthesis protein D.